We begin with the raw amino-acid sequence, 352 residues long: Glucose-6-phosphatase catalytic subunit 1 (352 aa).

The Lumenal portion of the chain corresponds to 1 to 27 (MDLLHSWGVELAVYLQTRYGKYEGLFD). A helical transmembrane segment spans residues 28–48 (LASTVADLHTTFFWLFPIWFH). At 49 to 56 (LRRDTALR) the chain is on the cytoplasmic side. A helical transmembrane segment spans residues 57-77 (LIWVAVIGDWLNLVLKWVLFG). The Lumenal portion of the chain corresponds to 78–113 (ERPYWWVHETKFYGAGPAPSLQQFPITCETGPGSPS). Position 79 (R79) interacts with substrate. Residues 114–134 (GHAMGAAGVWYVMVTALLSIA) form a helical membrane-spanning segment. H115 serves as the catalytic Proton donor. Residues 135-141 (REKQCPP) are Cytoplasmic-facing. A helical membrane pass occupies residues 142 to 162 (LLYRFLYIGLWMLMGLVELVV). The Lumenal segment spans residues 163 to 166 (CISR). R166 is a substrate binding site. The helical transmembrane segment at 167 to 187 (VYMAAHFPHQVIAGIITGTLV) threads the bilayer. The active-site Nucleophile is H172. Over 188–205 (AEVVSKEKWIYSASLKKY) the chain is Cytoplasmic. A helical membrane pass occupies residues 206–226 (FLITLFLTSFAVGFYVLLKAL). Residues 227–256 (DVDLLWTMEKAQKWCIRPEWVHLDSAPFAS) lie on the Lumenal side of the membrane. Residues 257–276 (LLRNMGSLFGLGLGLHSPFY) traverse the membrane as a helical segment. Topologically, residues 277 to 289 (KTTKMRIMSAPLR) are cytoplasmic. A helical membrane pass occupies residues 290 to 310 (IGCIVISVSLLHLLDGWTFSP). At 311–324 (ENHMTFYALSFGKS) the chain is on the lumenal side. A helical transmembrane segment spans residues 325–345 (AVALLIPTTLVPWALSKIYPV). Residues 346–352 (KTEGKNL) are Cytoplasmic-facing. The short motif at 349–352 (GKNL) is the Prevents secretion from ER element.

This sequence belongs to the glucose-6-phosphatase family.

It is found in the endoplasmic reticulum membrane. It catalyses the reaction D-glucose 6-phosphate + H2O = D-glucose + phosphate. Its pathway is carbohydrate biosynthesis; gluconeogenesis. Functionally, hydrolyzes glucose-6-phosphate to glucose in the endoplasmic reticulum. Forms with the glucose-6-phosphate transporter (SLC37A4/G6PT) the complex responsible for glucose production in the terminal step of glycogenolysis and gluconeogenesis. Hence, it is the key enzyme in homeostatic regulation of blood glucose levels. The protein is Glucose-6-phosphatase catalytic subunit 1 (g6pc1) of Haplochromis nubilus (Blue Victoria mouthbrooder).